A 180-amino-acid chain; its full sequence is MASSVLSSAAVATVSRTPAQASMVAPFTGLKSTVGFPATKKNDDITSLASNGGRVQCMKVWPTQNMKRYETLSYLPPLTTDQLARQVDYLLNNKWVPCLEFETDHGFVYREHHNSPGYYDGRYWTMWKLPMFGCTDPAQVLNELEECKKEYPNAFIRIIGFDSNRQVQCVSFIAYKPAGY.

The N-terminal 56 residues, 1-56 (MASSVLSSAAVATVSRTPAQASMVAPFTGLKSTVGFPATKKNDDITSLASNGGRVQ), are a transit peptide targeting the chloroplast.

The protein belongs to the RuBisCO small chain family. Heterohexadecamer of 8 large and 8 small subunits.

It localises to the plastid. The protein localises to the chloroplast. RuBisCO catalyzes two reactions: the carboxylation of D-ribulose 1,5-bisphosphate, the primary event in carbon dioxide fixation, as well as the oxidative fragmentation of the pentose substrate. Both reactions occur simultaneously and in competition at the same active site. Although the small subunit is not catalytic it is essential for maximal activity. This Spinacia oleracea (Spinach) protein is Ribulose bisphosphate carboxylase small subunit, chloroplastic 2.